The primary structure comprises 1213 residues: A disintegrin and metalloproteinase with thrombospondin motifs 2 (1213 aa).

A signal peptide spans 1–28 (MDPPAGAARRLLCPALLLLLLPPPPLLL). The propeptide occupies 29–260 (LPPPPASVRL…INSSRRRVRR (232 aa)). Asparagine 111 carries N-linked (GlcNAc...) asparagine glycosylation. The disordered stretch occupies residues 211–232 (YRRPPTPKPPPVSEPQALDTGV). A compositionally biased stretch (pro residues) spans 214–223 (PPTPKPPPVS). N-linked (GlcNAc...) asparagine glycosylation is present at asparagine 252. Residues 267 to 471 (YNIEVLLGVD…HSYDCLRDDP (205 aa)) form the Peptidase M12B domain. 10 disulfides stabilise this stretch: cysteine 344-cysteine 393, cysteine 387-cysteine 466, cysteine 426-cysteine 452, cysteine 493-cysteine 518, cysteine 504-cysteine 527, cysteine 513-cysteine 546, cysteine 540-cysteine 551, cysteine 574-cysteine 611, cysteine 578-cysteine 616, and cysteine 589-cysteine 601. Histidine 409 lines the Zn(2+) pocket. Residue glutamate 410 is part of the active site. Positions 413 and 419 each coordinate Zn(2+). The region spanning 480–560 (PQLPGLHYSM…CIWLTPDILK (81 aa)) is the Disintegrin domain. In terms of domain architecture, TSP type-1 1 spans 561–617 (RDGNWGAWTPFGSCSRTCGTGVKFRTRQCDNPHPANGGRTCSGLAYDFQLCNPQDCP). The Cell attachment site motif lies at 692 to 694 (RGD). A spacer region spans residues 723–851 (CKVVKGTFTR…LNVDDNNVLE (129 aa)). 3 TSP type-1 domains span residues 855-913 (VRHE…NPQE), 915-975 (SQPV…NREL), and 976-1030 (CPGR…APCP). Residues asparagine 949, asparagine 950, and asparagine 994 are each glycosylated (N-linked (GlcNAc...) asparagine). 3 disulfides stabilise this stretch: cysteine 988–cysteine 1024, cysteine 992–cysteine 1029, and cysteine 1003–cysteine 1013. A glycan (N-linked (GlcNAc...) asparagine) is linked at asparagine 1032. Positions 1060–1098 (SKDQCQGDKSMFCRMEVLSRYCSIPSYNKLCCKSCNPPR) constitute a PLAC domain. Residues asparagine 1099, asparagine 1147, and asparagine 1152 are each glycosylated (N-linked (GlcNAc...) asparagine).

In terms of assembly, may belong to a multimeric complex. Binds specifically to collagen type XIV. The cofactor is Zn(2+). Post-translationally, the precursor is cleaved by a furin endopeptidase. Glycosylated. Can be O-fucosylated by POFUT2 on a serine or a threonine residue found within the consensus sequence C1-X(2)-(S/T)-C2-G of the TSP type-1 repeat domains where C1 and C2 are the first and second cysteine residue of the repeat, respectively. Fucosylated repeats can then be further glycosylated by the addition of a beta-1,3-glucose residue by the glucosyltransferase, B3GALTL. Fucosylation mediates the efficient secretion of ADAMTS family members. Can also be C-glycosylated with one or two mannose molecules on tryptophan residues within the consensus sequence W-X-X-W of the TPRs, and N-glycosylated. These other glycosylations can also facilitate secretion.

It is found in the secreted. The protein localises to the extracellular space. The protein resides in the extracellular matrix. It carries out the reaction Cleaves the N-propeptide of collagen chain alpha1(I) at Pro-|-Gln and of alpha1(II) and alpha2(I) at Ala-|-Gln.. In terms of biological role, cleaves the propeptides of type I and II collagen prior to fibril assembly. Does not act on type III collagen. Cleaves lysyl oxidase LOX at a site downstream of its propeptide cleavage site to produce a short LOX form with reduced collagen-binding activity. This Mus musculus (Mouse) protein is A disintegrin and metalloproteinase with thrombospondin motifs 2 (Adamts2).